We begin with the raw amino-acid sequence, 672 residues long: Penicillin-binding protein activator LpoA (672 aa).

The signal sequence occupies residues 1–26; sequence MLPFHLVRTQAGRVIPVLLAALFLAG. A lipid anchor (N-palmitoyl cysteine) is attached at cysteine 27. Cysteine 27 carries the S-diacylglycerol cysteine lipid modification. Residues 298-336 are disordered; that stretch reads APPTDTAQAGQVTPSSDGQNAQSPAPYSDQAVASTTPAP. Positions 305–322 are enriched in polar residues; the sequence is QAGQVTPSSDGQNAQSPA. Positions 327 to 336 are enriched in low complexity; sequence QAVASTTPAP.

This sequence belongs to the LpoA family. In terms of assembly, interacts with PBP1a.

It is found in the cell outer membrane. In terms of biological role, regulator of peptidoglycan synthesis that is essential for the function of penicillin-binding protein 1A (PBP1a). The protein is Penicillin-binding protein activator LpoA of Pectobacterium parmentieri (strain WPP163) (Pectobacterium wasabiae (strain WPP163)).